A 452-amino-acid chain; its full sequence is Phosphoglucosamine mutase (452 aa).

S104 serves as the catalytic Phosphoserine intermediate. The Mg(2+) site is built by S104, D246, D248, and D250. The residue at position 104 (S104) is a Phosphoserine.

Belongs to the phosphohexose mutase family. Mg(2+) serves as cofactor. Activated by phosphorylation.

It catalyses the reaction alpha-D-glucosamine 1-phosphate = D-glucosamine 6-phosphate. In terms of biological role, catalyzes the conversion of glucosamine-6-phosphate to glucosamine-1-phosphate. The chain is Phosphoglucosamine mutase from Streptomyces griseus subsp. griseus (strain JCM 4626 / CBS 651.72 / NBRC 13350 / KCC S-0626 / ISP 5235).